A 210-amino-acid chain; its full sequence is ATP phosphoribosyltransferase (210 aa).

This sequence belongs to the ATP phosphoribosyltransferase family. Short subfamily. Heteromultimer composed of HisG and HisZ subunits.

Its subcellular location is the cytoplasm. It catalyses the reaction 1-(5-phospho-beta-D-ribosyl)-ATP + diphosphate = 5-phospho-alpha-D-ribose 1-diphosphate + ATP. It participates in amino-acid biosynthesis; L-histidine biosynthesis; L-histidine from 5-phospho-alpha-D-ribose 1-diphosphate: step 1/9. Functionally, catalyzes the condensation of ATP and 5-phosphoribose 1-diphosphate to form N'-(5'-phosphoribosyl)-ATP (PR-ATP). Has a crucial role in the pathway because the rate of histidine biosynthesis seems to be controlled primarily by regulation of HisG enzymatic activity. In Petrotoga mobilis (strain DSM 10674 / SJ95), this protein is ATP phosphoribosyltransferase.